The primary structure comprises 535 residues: MATCIWLRSCGARRLGSTFPGCRLRPRAGGLVPASGPAPGPAQLRCYAGGLAGLSAALLRTDSFVGGRWLPAAATFPVQDPASGAALGMVADCGVREARAAVRAAYEAFCRWREVSAKERSSLLRKWYNLMIQNKDDLARIITAESGKPLKEAHGEILYSAFFLEWFSEEARRVYGDIIYTPAKDRRALVLKQPXGVAAVITPWNFPSAMITRKVGAALAAGCTVVVKPAEDTPFSALALAELASQAGIPSGVYNVIPCSRKNAKEVGEAICTDPLVSKISFTGSTTTGKILLHHAANSVKRVSMELGGLAPFIVFDSANVDQAVAGAMASKFRNTGQTCVCSNQFLVQRGIHDAFVKAFAEAMKKNLRVGNGFEEGTTQGPLINEKAVEKVEKQVNDAVSKGATVVTGGKRHQLGKNFFEPTLLCNVTQDMLCTHEETFGPLAPVIKFDTEEEAIAIANAADVGLAGYFYSQDPAQIWRVAEQLEVGMVGVNEGLISSVECPFGGVKQSGLGREGSKYGIDEYLELKYVCYGGL.

The N-terminal 47 residues, methionine 1–tyrosine 47, are a transit peptide targeting the mitochondrion. Lysine 126 is subject to N6-acetyllysine; alternate. Residue lysine 126 is modified to N6-succinyllysine; alternate. Lysine 135 and lysine 184 each carry N6-succinyllysine. Residues arginine 213 and lysine 228 to glutamate 231 contribute to the NAD(+) site. Arginine 213 is a substrate binding site. Lysine 265 carries the post-translational modification N6-acetyllysine; alternate. The residue at position 265 (lysine 265) is an N6-succinyllysine; alternate. An NAD(+)-binding site is contributed by glycine 284–glycine 289. Glutamate 306 acts as the Proton acceptor in catalysis. Arginine 334 is a substrate binding site. Cysteine 340 acts as the Nucleophile in catalysis. Cysteines 340 and 342 form a disulfide. The residue at position 365 (lysine 365) is an N6-acetyllysine. An N6-succinyllysine modification is found at lysine 402. Lysine 411 carries the post-translational modification N6-acetyllysine. A substrate-binding site is contributed by serine 498. Serine 499 is subject to Phosphoserine.

This sequence belongs to the aldehyde dehydrogenase family. In terms of assembly, homotetramer.

It localises to the mitochondrion. It catalyses the reaction succinate semialdehyde + NAD(+) + H2O = succinate + NADH + 2 H(+). The protein operates within amino-acid degradation; 4-aminobutanoate degradation. Its activity is regulated as follows. Redox-regulated. Inhibited under oxydizing conditions. Catalyzes one step in the degradation of the inhibitory neurotransmitter gamma-aminobutyric acid (GABA). The protein is Succinate-semialdehyde dehydrogenase, mitochondrial (ALDH5A1) of Pan troglodytes (Chimpanzee).